The chain runs to 436 residues: MLKVSAVLCVCAAAWCSQSLAAAAAVAAAVGRSDGGNFLDDKQWLTTISQYDKEVGQWNKFRDEVEDDDFRTWSPGKPFDQALDPAKDPCLKMKCSRHKVCIAQDYQTAVCISHRRLTHRMKEAGVDHRQWRGPILSTCKQCPVVYPSPVCGSDGHTYSFQCKLEYQACVLGKQISVKCEGHCPCPSDKPTSTSRNVKRACSDLEFREVANRLRDWFKALHESGSQNKKTKTLLRPERSRFDTSILPICKDSLGWMFNRLDTNYDLLLDQSELRSIYLDKNEQCTKAFFNSCDTYKDSLISNNEWCYCFQRQQDPPCQTELSNIQKRQGVKKLLGQYIPLCDEDGYYKPTQCHGSVGQCWCVDRYGNEVMGSRINGVADCAIDFEISGDFASGDFHEWTDDEDDEDDIMNDEDEIEDDDEDEGDDDDGGDDHDGYI.

The signal sequence occupies residues 1–22; sequence MLKVSAVLCVCAAAWCSQSLAA. Disulfide bonds link C90–C101, C95–C111, C139–C169, C142–C162, C151–C183, C317–C341, C352–C359, and C361–C380. The Kazal-like domain occupies 133–185; the sequence is GPILSTCKQCPVVYPSPVCGSDGHTYSFQCKLEYQACVLGKQISVKCEGHCPC. The Thyroglobulin type-1 domain maps to 314 to 380; the sequence is DPPCQTELSN…GSRINGVADC (67 aa). 2 O-linked (Xyl...) (glycosaminoglycan) serine glycosylation sites follow: S387 and S392. The segment at 393-436 is disordered; the sequence is GDFHEWTDDEDDEDDIMNDEDEIEDDDEDEGDDDDGGDDHDGYI. Positions 399-430 are enriched in acidic residues; the sequence is TDDEDDEDDIMNDEDEIEDDDEDEGDDDDGGD.

Contains chondroitin sulfate and heparan sulfate O-linked oligosaccharides. In terms of tissue distribution, expressed in brain.

It is found in the secreted. Its subcellular location is the extracellular space. The protein resides in the extracellular matrix. May participate in diverse steps of neurogenesis. Inhibits the processing of pro-matrix metalloproteinase 2 (MMP-2) by MT1-MMP and MT3-MMP. May interfere with tumor invasion. In Pongo abelii (Sumatran orangutan), this protein is Testican-3 (SPOCK3).